We begin with the raw amino-acid sequence, 108 residues long: Putative septation protein SpoVG (108 aa).

The segment at 84 to 108 is disordered; it reads FEKQSSVETEPVTEENMETAENENE. Residues 94 to 108 show a composition bias toward acidic residues; the sequence is PVTEENMETAENENE.

This sequence belongs to the SpoVG family.

Functionally, could be involved in septation. The sequence is that of Putative septation protein SpoVG from Finegoldia magna (strain ATCC 29328 / DSM 20472 / WAL 2508) (Peptostreptococcus magnus).